The following is a 99-amino-acid chain: MAPTLLTEEQRKELIPKDWEMVVGRDAIKKTFTFKDFNQAFSFMTRVALVAEQMNHHPEWFNVYNRVEITLATHDCSGLSVNDTKMADIMNQFFNQLHQ.

It belongs to the pterin-4-alpha-carbinolamine dehydratase family.

The enzyme catalyses (4aS,6R)-4a-hydroxy-L-erythro-5,6,7,8-tetrahydrobiopterin = (6R)-L-erythro-6,7-dihydrobiopterin + H2O. In terms of biological role, involved in tetrahydrobiopterin biosynthesis. The protein is Pterin-4-alpha-carbinolamine dehydratase (pcbd) of Dictyostelium discoideum (Social amoeba).